The sequence spans 54 residues: ATP synthase F(0) complex subunit 8 (54 aa).

Residues 4 to 24 form a helical membrane-spanning segment; sequence LNPGPWFAILVFSWLIFLTII. The tract at residues 35–54 is disordered; it reads NEPTPVSAEKHKTESWDWPW. The segment covering 42–54 has biased composition (basic and acidic residues); that stretch reads AEKHKTESWDWPW.

The protein belongs to the ATPase protein 8 family. In terms of assembly, component of the ATP synthase complex composed at least of ATP5F1A/subunit alpha, ATP5F1B/subunit beta, ATP5MC1/subunit c (homooctomer), MT-ATP6/subunit a, MT-ATP8/subunit 8, ATP5ME/subunit e, ATP5MF/subunit f, ATP5MG/subunit g, ATP5MK/subunit k, ATP5MJ/subunit j, ATP5F1C/subunit gamma, ATP5F1D/subunit delta, ATP5F1E/subunit epsilon, ATP5PF/subunit F6, ATP5PB/subunit b, ATP5PD/subunit d, ATP5PO/subunit OSCP. ATP synthase complex consists of a soluble F(1) head domain (subunits alpha(3) and beta(3)) - the catalytic core - and a membrane F(0) domain - the membrane proton channel (subunits c, a, 8, e, f, g, k and j). These two domains are linked by a central stalk (subunits gamma, delta, and epsilon) rotating inside the F1 region and a stationary peripheral stalk (subunits F6, b, d, and OSCP).

Its subcellular location is the mitochondrion membrane. Subunit 8, of the mitochondrial membrane ATP synthase complex (F(1)F(0) ATP synthase or Complex V) that produces ATP from ADP in the presence of a proton gradient across the membrane which is generated by electron transport complexes of the respiratory chain. ATP synthase complex consist of a soluble F(1) head domain - the catalytic core - and a membrane F(1) domain - the membrane proton channel. These two domains are linked by a central stalk rotating inside the F(1) region and a stationary peripheral stalk. During catalysis, ATP synthesis in the catalytic domain of F(1) is coupled via a rotary mechanism of the central stalk subunits to proton translocation. In vivo, can only synthesize ATP although its ATP hydrolase activity can be activated artificially in vitro. Part of the complex F(0) domain. The sequence is that of ATP synthase F(0) complex subunit 8 from Cyprinus carpio (Common carp).